Consider the following 504-residue polypeptide: Anaerobic nitric oxide reductase transcription regulator NorR (504 aa).

Aspartate 57 is modified (4-aspartylphosphate). In terms of domain architecture, Sigma-54 factor interaction spans 187-416; that stretch reads MIGLSPGMTQ…LEHAIHRAVV (230 aa). ATP is bound by residues 215–222 and 278–287; these read GETGTGKE and ADNGTLFLDE. Residues 479 to 498 constitute a DNA-binding region (H-T-H motif); it reads WAACARMLETDVANLHRLAK.

It participates in nitrogen metabolism; nitric oxide reduction. Its function is as follows. Required for the expression of anaerobic nitric oxide (NO) reductase, acts as a transcriptional activator for at least the norVW operon. Activation also requires sigma-54. This Escherichia coli O9:H4 (strain HS) protein is Anaerobic nitric oxide reductase transcription regulator NorR.